We begin with the raw amino-acid sequence, 644 residues long: ATP-dependent zinc metalloprotease FtsH (644 aa).

Over 1 to 13 the chain is Cytoplasmic; the sequence is MANNDNKHRRSMS. A helical membrane pass occupies residues 14 to 34; that stretch reads MLLYIAVAIFVYLLLSNTLLP. Residues 35 to 117 are Extracellular-facing; that stretch reads GLLRQQIQTV…SIPDNSANML (83 aa). Residues 118-138 traverse the membrane as a helical segment; it reads MYALIQYGIPLIIFLGIGFFI. The Cytoplasmic portion of the chain corresponds to 139–644; the sequence is NRSLKRAMGD…DEGSSTPSEE (506 aa). Residue 224 to 231 participates in ATP binding; sequence GPPGTGKT. His445 is a binding site for Zn(2+). Glu446 is a catalytic residue. Residues His449 and Asp522 each contribute to the Zn(2+) site.

It in the central section; belongs to the AAA ATPase family. In the C-terminal section; belongs to the peptidase M41 family. As to quaternary structure, homohexamer. The cofactor is Zn(2+).

Its subcellular location is the cell membrane. In terms of biological role, acts as a processive, ATP-dependent zinc metallopeptidase for both cytoplasmic and membrane proteins. Plays a role in the quality control of integral membrane proteins. The chain is ATP-dependent zinc metalloprotease FtsH from Lancefieldella parvula (strain ATCC 33793 / DSM 20469 / CCUG 32760 / JCM 10300 / KCTC 3663 / VPI 0546 / 1246) (Atopobium parvulum).